The sequence spans 343 residues: UPF0284 protein Msed_0735 (343 aa).

The protein belongs to the UPF0284 family.

The chain is UPF0284 protein Msed_0735 from Metallosphaera sedula (strain ATCC 51363 / DSM 5348 / JCM 9185 / NBRC 15509 / TH2).